The following is a 237-amino-acid chain: E3 ubiquitin-protein ligase RNF166 (237 aa).

The RING-type zinc finger occupies 33-73; that stretch reads CPICLEVYHRPVAIGSCGHTFCGECLQPCLQVPSPLCPLCR. Zn(2+) is bound by residues cysteine 98, cysteine 101, histidine 113, and cysteine 117. The segment at 98 to 117 adopts a C2HC RNF-type zinc-finger fold; it reads CRGCNKKVTLAKMRAHISSC. The region spanning 221-237 is the UIM domain; that stretch reads DEEAAFQAALALSLSEN.

The protein resides in the cytoplasm. The catalysed reaction is S-ubiquitinyl-[E2 ubiquitin-conjugating enzyme]-L-cysteine + [acceptor protein]-L-lysine = [E2 ubiquitin-conjugating enzyme]-L-cysteine + N(6)-ubiquitinyl-[acceptor protein]-L-lysine.. It participates in protein modification; protein ubiquitination. Its function is as follows. E3 ubiquitin-protein ligase that promotes the ubiquitination of different substrates. In turn, participates in different biological processes including interferon production or autophagy. Plays a role in the activation of RNA virus-induced interferon-beta production by promoting the ubiquitination of TRAF3 and TRAF6. Also plays a role in the early recruitment of autophagy adapters to bacteria. Mediates 'Lys-29' and 'Lys-33'-linked ubiquitination of SQSTM1 leading to xenophagic targeting of bacteria and inhibition of their replication. This chain is E3 ubiquitin-protein ligase RNF166 (Rnf166), found in Mus musculus (Mouse).